Here is a 161-residue protein sequence, read N- to C-terminus: Ragulator complex protein LAMTOR1 (161 aa).

A disordered region spans residues Met-1–Leu-43. Gly-2 carries the N-myristoyl glycine lipid modification. Residues Cys-3 and Cys-4 are each lipidated (S-palmitoyl cysteine). Residue Lys-20 forms a Glycyl lysine isopeptide (Lys-Gly) (interchain with G-Cter in ubiquitin) linkage. Ser-27 is subject to Phosphoserine. Residue Lys-31 forms a Glycyl lysine isopeptide (Lys-Gly) (interchain with G-Cter in ubiquitin) linkage. 2 positions are modified to phosphoserine: Ser-42 and Ser-56. Lys-60 participates in a covalent cross-link: Glycyl lysine isopeptide (Lys-Gly) (interchain with G-Cter in ubiquitin). Position 98 is a phosphoserine (Ser-98). Residues Lys-103 and Lys-104 each participate in a glycyl lysine isopeptide (Lys-Gly) (interchain with G-Cter in ubiquitin) cross-link. The interaction with LAMTOR2 and LAMTOR3 stretch occupies residues Ser-121–Pro-161. Ser-141 carries the phosphoserine modification.

This sequence belongs to the LAMTOR1 family. Part of the Ragulator complex composed of LAMTOR1, LAMTOR2, LAMTOR3, LAMTOR4 and LAMTOR5. LAMTOR4 and LAMTOR5 form a heterodimer that interacts, through LAMTOR1, with a LAMTOR2, LAMTOR3 heterodimer. Interacts with LAMTOR2 and LAMTOR3; the interaction is direct. The Ragulator complex interacts with both the mTORC1 complex and heterodimers constituted of the Rag GTPases RagA/RRAGA, RagB/RRAGB, RagC/RRAGC and RagD/RRAGD; regulated by amino acid availability. The Ragulator complex interacts with SLC38A9; the probable amino acid sensor. Component of the lysosomal folliculin complex (LFC), composed of FLCN, FNIP1 (or FNIP2), RagA/RRAGA or RagB/RRAGB GDP-bound, RagC/RRAGC or RagD/RRAGD GTP-bound, and Ragulator. Associates with the lysosomal V-ATPase complex; interaction promotes the guanine nucleotide exchange factor (GEF) of the Ragulator complex. Interacts with MMP14. Interacts with CDKN1B; prevents the interaction of CDKN1B with RHOA leaving RHOA in a form accessible to activation by ARHGEF2. Interacts with PIP4P1. In terms of processing, N-terminal myristoylation and palmitoylation mediates its recruitment to lysosome membranes, thereby promoting localization of the Ragulator complex to lysosomes. N-myristoylation by NMT1 is required for palmitoylation at Cys-3 and Cys-4. May be palmitoylated by ZDHHC3. Post-translationally, ubiquitinated at Lys-60, Lys-103 and Lys-104 by UBE3A, promoting its degradation by the proteasome. Ubiquitination at Lys-20 impairs the association with the lysosomal V-ATPase complex. Deubiquitination at Lys-20 by USP32 promotes the association with the lysosomal V-ATPase complex and subsequent activation of the mTORC1 complex.

Its subcellular location is the lysosome membrane. It is found in the late endosome membrane. In terms of biological role, key component of the Ragulator complex, a multiprotein complex involved in amino acid sensing and activation of mTORC1, a signaling complex promoting cell growth in response to growth factors, energy levels, and amino acids. Activated by amino acids through a mechanism involving the lysosomal V-ATPase, the Ragulator plays a dual role for the small GTPases Rag (RagA/RRAGA, RagB/RRAGB, RagC/RRAGC and/or RagD/RRAGD): it (1) acts as a guanine nucleotide exchange factor (GEF), activating the small GTPases Rag and (2) mediates recruitment of Rag GTPases to the lysosome membrane. Activated Ragulator and Rag GTPases function as a scaffold recruiting mTORC1 to lysosomes where it is in turn activated. LAMTOR1 is directly responsible for anchoring the Ragulator complex to the lysosomal membrane. LAMTOR1 wraps around the other subunits of the Ragulator complex to hold them in place and interacts with the Rag GTPases, thereby playing a key role in the recruitment of the mTORC1 complex to lysosomes. Also involved in the control of embryonic stem cells differentiation via non-canonical RagC/RRAGC and RagD/RRAGD activation: together with FLCN, it is necessary to recruit and activate RagC/RRAGC and RagD/RRAGD at the lysosomes, and to induce exit of embryonic stem cells from pluripotency via non-canonical, mTOR-independent TFE3 inactivation. Also required for late endosomes/lysosomes biogenesis it may regulate both the recycling of receptors through endosomes and the MAPK signaling pathway through recruitment of some of its components to late endosomes. May be involved in cholesterol homeostasis regulating LDL uptake and cholesterol release from late endosomes/lysosomes. May also play a role in RHOA activation. In Homo sapiens (Human), this protein is Ragulator complex protein LAMTOR1.